Consider the following 464-residue polypeptide: Fumarate hydratase class II (464 aa).

Substrate contacts are provided by residues 98–100, Arg126, 129–132, 139–141, and Thr187; these read SGT, HPND, and SSN. Residue His188 is the Proton donor/acceptor of the active site. The active site involves Ser318. Residues Ser319 and 324 to 326 each bind substrate; that span reads KVN.

This sequence belongs to the class-II fumarase/aspartase family. Fumarase subfamily. As to quaternary structure, homotetramer.

The protein resides in the cytoplasm. The catalysed reaction is (S)-malate = fumarate + H2O. It participates in carbohydrate metabolism; tricarboxylic acid cycle; (S)-malate from fumarate: step 1/1. Its function is as follows. Involved in the TCA cycle. Catalyzes the stereospecific interconversion of fumarate to L-malate. In Photorhabdus laumondii subsp. laumondii (strain DSM 15139 / CIP 105565 / TT01) (Photorhabdus luminescens subsp. laumondii), this protein is Fumarate hydratase class II.